Here is a 253-residue protein sequence, read N- to C-terminus: Sulfate transporter CysZ (253 aa).

The next 4 membrane-spanning stretches (helical) occupy residues 31–51, 75–95, 151–171, and 222–242; these read FVIL…WWLF, LLWP…FSTI, IVLL…PVLW, and IPLL…AMWV.

Belongs to the CysZ family.

The protein localises to the cell inner membrane. In terms of biological role, high affinity, high specificity proton-dependent sulfate transporter, which mediates sulfate uptake. Provides the sulfur source for the cysteine synthesis pathway. In Escherichia coli O7:K1 (strain IAI39 / ExPEC), this protein is Sulfate transporter CysZ.